A 2226-amino-acid polypeptide reads, in one-letter code: DNA polymerase epsilon catalytic subunit A (2226 aa).

The interval 1240-1265 is disordered; sequence RVSKVTSRKRRNGKANNVSDSEEEER. Zn(2+) is bound by residues C2112, C2115, C2134, and C2137. The segment at 2112-2137 adopts a CysA-type zinc-finger fold; that stretch reads CDYCNYIRDIDFCRDEQKNIWNCSNC. The [4Fe-4S] cluster site is built by C2168, C2171, C2183, and C2185. The short motif at 2168 to 2185 is the CysB motif element; sequence CSKCHQIKSDNMSEYCKC.

The protein belongs to the DNA polymerase type-B family. In terms of assembly, heterotetramer. Consists of 4 subunits: POL2, DPB2, DPB3 and DPB4. [4Fe-4S] cluster serves as cofactor.

It is found in the nucleus. The catalysed reaction is DNA(n) + a 2'-deoxyribonucleoside 5'-triphosphate = DNA(n+1) + diphosphate. Functionally, DNA polymerase II participates in chromosomal DNA replication. The protein is DNA polymerase epsilon catalytic subunit A (POL2) of Debaryomyces hansenii (strain ATCC 36239 / CBS 767 / BCRC 21394 / JCM 1990 / NBRC 0083 / IGC 2968) (Yeast).